The following is an 84-amino-acid chain: GTP cyclohydrolase 1 feedback regulatory protein (84 aa).

Belongs to the GFRP family. In terms of assembly, homopentamer. Forms a complex with GCH1 where a GCH1 homodecamer is sandwiched by two GFRP homopentamers.

It is found in the nucleus. The protein resides in the nucleus membrane. Its subcellular location is the cytoplasm. The protein localises to the cytosol. Functionally, mediates tetrahydrobiopterin inhibition of GTP cyclohydrolase 1. This is GTP cyclohydrolase 1 feedback regulatory protein (gchfr) from Xenopus tropicalis (Western clawed frog).